The sequence spans 524 residues: Probable cytosol aminopeptidase (524 aa).

Mn(2+) contacts are provided by lysine 288 and aspartate 293. Lysine 300 is a catalytic residue. Residues aspartate 311, aspartate 370, and glutamate 372 each contribute to the Mn(2+) site. Residue arginine 374 is part of the active site.

The protein belongs to the peptidase M17 family. Requires Mn(2+) as cofactor.

Its subcellular location is the cytoplasm. The enzyme catalyses Release of an N-terminal amino acid, Xaa-|-Yaa-, in which Xaa is preferably Leu, but may be other amino acids including Pro although not Arg or Lys, and Yaa may be Pro. Amino acid amides and methyl esters are also readily hydrolyzed, but rates on arylamides are exceedingly low.. It catalyses the reaction Release of an N-terminal amino acid, preferentially leucine, but not glutamic or aspartic acids.. In terms of biological role, presumably involved in the processing and regular turnover of intracellular proteins. Catalyzes the removal of unsubstituted N-terminal amino acids from various peptides. This is Probable cytosol aminopeptidase (pepA) from Mycobacterium leprae (strain TN).